The following is a 93-amino-acid chain: Bombyxin-related peptide B (93 aa).

The signal sequence occupies residues 1–21 (MKFVLVLVSLALLVSLASVQG). Intrachain disulfides connect Cys-25–Cys-80, Cys-37–Cys-93, and Cys-79–Cys-84. Residues 47–71 (SGAMGAAAMYGTRGWRWAAMGGNRG) constitute a propeptide, c peptide like.

The protein belongs to the insulin family. In terms of assembly, heterodimer of a B chain and an A chain linked by two disulfide bonds. In terms of tissue distribution, located in 4 pairs of medial neurosecretory cells in the brain.

It localises to the secreted. In Agrius convolvuli (Convolvulus hawk-moth), this protein is Bombyxin-related peptide B.